Reading from the N-terminus, the 316-residue chain is MSIDLEWNGLDSSLASSLIDALNRQLSSTSRPSFIGPIEVTSFDFGSVSPDIELVDLRDIYRDFLEDDEDAEDVEKEAVKESQWTDEEDDFEWISRKAVRGKGLPQDVPAYHLLPPHMRYGRGVPMDMFASTPSLRPTRDIVSVTFPLRVRNGSRPPHQPDGQEPNPHPNLQLHLHITWNSNLRLTLTTSLLINYPSPMFMSLPIKLSVTGLLFNGEVVVAYEGERRRVHFETPPEADEDMPAAAAGTARAGKPLPIGQRLLPSIYIESEIGQADKHVLKNVTRVERFIQDVIRKTIEEELVFPNFHTLVLGDSGS.

One can recognise an SMP-LTD domain in the interval 1–312; the sequence is MSIDLEWNGL…FPNFHTLVLG (312 aa).

Belongs to the MDM12 family. Component of the ER-mitochondria encounter structure (ERMES) or MDM complex, composed of MMM1, MDM10, MDM12 and MDM34. An MMM1 homodimer associates with one molecule of MDM12 on each side in a pairwise head-to-tail manner, and the SMP-LTD domains of MMM1 and MDM12 generate a continuous hydrophobic tunnel for phospholipid trafficking.

It is found in the mitochondrion outer membrane. The protein resides in the endoplasmic reticulum membrane. In terms of biological role, component of the ERMES/MDM complex, which serves as a molecular tether to connect the endoplasmic reticulum (ER) and mitochondria. Components of this complex are involved in the control of mitochondrial shape and protein biogenesis, and function in nonvesicular lipid trafficking between the ER and mitochondria. MDM12 is required for the interaction of the ER-resident membrane protein MMM1 and the outer mitochondrial membrane-resident beta-barrel protein MDM10. The MDM12-MMM1 subcomplex functions in the major beta-barrel assembly pathway that is responsible for biogenesis of all mitochondrial outer membrane beta-barrel proteins, and acts in a late step after the SAM complex. The MDM10-MDM12-MMM1 subcomplex further acts in the TOM40-specific pathway after the action of the MDM12-MMM1 complex. Essential for establishing and maintaining the structure of mitochondria and maintenance of mtDNA nucleoids. In Postia placenta (strain ATCC 44394 / Madison 698-R) (Brown rot fungus), this protein is Mitochondrial distribution and morphology protein 12.